Consider the following 207-residue polypeptide: Adenylyl-sulfate kinase (207 aa).

ATP is bound at residue 34–41 (GLSGSGKS). The active-site Phosphoserine intermediate is Ser-108.

This sequence belongs to the APS kinase family.

The catalysed reaction is adenosine 5'-phosphosulfate + ATP = 3'-phosphoadenylyl sulfate + ADP + H(+). It participates in sulfur metabolism; hydrogen sulfide biosynthesis; sulfite from sulfate: step 2/3. Its function is as follows. Catalyzes the synthesis of activated sulfate. This chain is Adenylyl-sulfate kinase, found in Lactiplantibacillus plantarum (strain ATCC BAA-793 / NCIMB 8826 / WCFS1) (Lactobacillus plantarum).